The chain runs to 305 residues: Glutaminase (305 aa).

Substrate-binding residues include Ser61, Asn113, Glu158, Asn165, Tyr189, Tyr241, and Val259.

Belongs to the glutaminase family. As to quaternary structure, homotetramer.

The enzyme catalyses L-glutamine + H2O = L-glutamate + NH4(+). The chain is Glutaminase from Clostridium botulinum (strain ATCC 19397 / Type A).